A 94-amino-acid polypeptide reads, in one-letter code: Cell division topological specificity factor (94 aa).

Belongs to the MinE family.

Its function is as follows. Prevents the cell division inhibition by proteins MinC and MinD at internal division sites while permitting inhibition at polar sites. This ensures cell division at the proper site by restricting the formation of a division septum at the midpoint of the long axis of the cell. This Alkaliphilus metalliredigens (strain QYMF) protein is Cell division topological specificity factor.